A 60-amino-acid polypeptide reads, in one-letter code: UPF0434 protein Spro_1718 (60 aa).

This sequence belongs to the UPF0434 family.

The polypeptide is UPF0434 protein Spro_1718 (Serratia proteamaculans (strain 568)).